A 123-amino-acid chain; its full sequence is Small ribosomal subunit protein uS13 (123 aa).

Residues 92–123 (HRRGLPVRGQKTKTNARTRKGPKKLVVSRKKK) form a disordered region.

The protein belongs to the universal ribosomal protein uS13 family. In terms of assembly, part of the 30S ribosomal subunit. Forms a loose heterodimer with protein S19. Forms two bridges to the 50S subunit in the 70S ribosome.

Its function is as follows. Located at the top of the head of the 30S subunit, it contacts several helices of the 16S rRNA. In the 70S ribosome it contacts the 23S rRNA (bridge B1a) and protein L5 of the 50S subunit (bridge B1b), connecting the 2 subunits; these bridges are implicated in subunit movement. Contacts the tRNAs in the A and P-sites. The polypeptide is Small ribosomal subunit protein uS13 (Clostridium tetani (strain Massachusetts / E88)).